Consider the following 112-residue polypeptide: Probable prefoldin subunit 1 (112 aa).

The protein belongs to the prefoldin subunit beta family. Heterohexamer of two PFD-alpha type and four PFD-beta type subunits.

Functionally, binds specifically to cytosolic chaperonin (c-CPN) and transfers target proteins to it. Binds to nascent polypeptide chain and promotes folding in an environment in which there are many competing pathways for nonnative proteins. The polypeptide is Probable prefoldin subunit 1 (Schizosaccharomyces pombe (strain 972 / ATCC 24843) (Fission yeast)).